The following is a 118-amino-acid chain: Small ribosomal subunit protein uS13 (118 aa).

The interval 91–118 is disordered; it reads HRRSLPVRGQRTKTNARTRKGPRKPIRK.

It belongs to the universal ribosomal protein uS13 family. In terms of assembly, part of the 30S ribosomal subunit. Forms a loose heterodimer with protein S19. Forms two bridges to the 50S subunit in the 70S ribosome.

Located at the top of the head of the 30S subunit, it contacts several helices of the 16S rRNA. In the 70S ribosome it contacts the 23S rRNA (bridge B1a) and protein L5 of the 50S subunit (bridge B1b), connecting the 2 subunits; these bridges are implicated in subunit movement. Contacts the tRNAs in the A and P-sites. The chain is Small ribosomal subunit protein uS13 from Marinomonas sp. (strain MWYL1).